A 210-amino-acid polypeptide reads, in one-letter code: N-(5'-phosphoribosyl)anthranilate isomerase (210 aa).

It belongs to the TrpF family.

It catalyses the reaction N-(5-phospho-beta-D-ribosyl)anthranilate = 1-(2-carboxyphenylamino)-1-deoxy-D-ribulose 5-phosphate. Its pathway is amino-acid biosynthesis; L-tryptophan biosynthesis; L-tryptophan from chorismate: step 3/5. This is N-(5'-phosphoribosyl)anthranilate isomerase from Methanococcus aeolicus (strain ATCC BAA-1280 / DSM 17508 / OCM 812 / Nankai-3).